Consider the following 157-residue polypeptide: S-ribosylhomocysteine lyase 2 (157 aa).

The Fe cation site is built by H54, H58, and C124.

Belongs to the LuxS family. In terms of assembly, homodimer. Fe cation is required as a cofactor.

It catalyses the reaction S-(5-deoxy-D-ribos-5-yl)-L-homocysteine = (S)-4,5-dihydroxypentane-2,3-dione + L-homocysteine. Its function is as follows. Involved in the synthesis of autoinducer 2 (AI-2) which is secreted by bacteria and is used to communicate both the cell density and the metabolic potential of the environment. The regulation of gene expression in response to changes in cell density is called quorum sensing. Catalyzes the transformation of S-ribosylhomocysteine (RHC) to homocysteine (HC) and 4,5-dihydroxy-2,3-pentadione (DPD). In Lactobacillus delbrueckii subsp. bulgaricus (strain ATCC BAA-365 / Lb-18), this protein is S-ribosylhomocysteine lyase 2.